The sequence spans 125 residues: Linear element protein rec27 (125 aa).

The stretch at 45-104 (KTNIENEKKAFIKDVSQVQQKIKEFEIQKANQIKQLNEEKLSIEARKQQLEIEIRNQLLQ) forms a coiled coil.

Component of linear elements (LinEs), which are similar to synaptonemal complexes, at least composed of rec27, rec25, rec10 and mug20.

It localises to the cytoplasm. The protein resides in the nucleus. It is found in the chromosome. In terms of biological role, during meiotic DNA recombination, binds to and activates DNA double-strand break (DSB) hotspot sites. This chain is Linear element protein rec27, found in Schizosaccharomyces pombe (strain 972 / ATCC 24843) (Fission yeast).